A 160-amino-acid chain; its full sequence is Phosphopantetheine adenylyltransferase (160 aa).

Thr10 is a substrate binding site. Residues 10–11 and His18 contribute to the ATP site; that span reads TF. Substrate is bound by residues Lys42, Leu74, and Arg88. ATP contacts are provided by residues 89–91, Glu99, and 124–130; these read GLR and NSFISST.

This sequence belongs to the bacterial CoaD family. In terms of assembly, homohexamer. Mg(2+) is required as a cofactor.

It is found in the cytoplasm. It carries out the reaction (R)-4'-phosphopantetheine + ATP + H(+) = 3'-dephospho-CoA + diphosphate. Its pathway is cofactor biosynthesis; coenzyme A biosynthesis; CoA from (R)-pantothenate: step 4/5. In terms of biological role, reversibly transfers an adenylyl group from ATP to 4'-phosphopantetheine, yielding dephospho-CoA (dPCoA) and pyrophosphate. The polypeptide is Phosphopantetheine adenylyltransferase (Pseudoalteromonas atlantica (strain T6c / ATCC BAA-1087)).